We begin with the raw amino-acid sequence, 456 residues long: Coenzyme F420 hydrogenase subunit alpha (456 aa).

Positions 63, 66, 432, and 435 each coordinate Ni(2+).

The protein belongs to the [NiFe]/[NiFeSe] hydrogenase large subunit family. As to quaternary structure, pentamer of two alpha chains, two beta chains and a gamma chain. It depends on Ni(2+) as a cofactor. Iron-sulfur cluster serves as cofactor. The cofactor is FAD.

The protein resides in the cell membrane. The catalysed reaction is oxidized coenzyme F420-(gamma-L-Glu)(n) + H2 + H(+) = reduced coenzyme F420-(gamma-L-Glu)(n). Its function is as follows. Reduces the physiological low-potential two-electron acceptor coenzyme F420, and the artificial one-electron acceptor methylviologen. The polypeptide is Coenzyme F420 hydrogenase subunit alpha (frhA) (Methanosarcina barkeri (strain Fusaro / DSM 804)).